A 443-amino-acid chain; its full sequence is Endothelin receptor type B (443 aa).

A signal peptide spans Met1–Gly26. The Extracellular portion of the chain corresponds to Glu27–Lys102. The span at Thr51 to Ser62 shows a compositional bias: polar residues. The segment at Thr51–Pro89 is disordered. N-linked (GlcNAc...) asparagine glycosylation is present at Asn60. The chain crosses the membrane as a helical span at residues Tyr103 to Ile127. Residues Tyr128 to Asn138 are Cytoplasmic-facing. Residues Ile139–Leu164 form a helical membrane-spanning segment. The Extracellular portion of the chain corresponds to Ala165–Lys176. A disulfide bond links Cys175 and Cys256. Residues Leu177–Ile198 form a helical membrane-spanning segment. Residues Asp199–Thr219 lie on the Cytoplasmic side of the membrane. A helical membrane pass occupies residues Ala220–Ile244. Topologically, residues Thr245–Asn272 are extracellular. A helical transmembrane segment spans residues Ala273–Glu297. The Cytoplasmic segment spans residues Thr298–Thr325. Phosphoserine is present on Ser306. A helical transmembrane segment spans residues Val326–Tyr351. Over Asp352 to Ser363 the chain is Extracellular. Residues Phe364–Val390 traverse the membrane as a helical segment. Residues Ser391–Ser443 lie on the Cytoplasmic side of the membrane. S-palmitoyl cysteine attachment occurs at residues Cys403, Cys404, and Cys406. At Ser420 the chain carries Phosphoserine. Residue Tyr440 is modified to Phosphotyrosine. 3 positions are modified to phosphoserine: Ser441, Ser442, and Ser443.

This sequence belongs to the G-protein coupled receptor 1 family. Endothelin receptor subfamily. EDNRB sub-subfamily.

Its subcellular location is the cell membrane. Functionally, non-specific receptor for endothelin 1, 2, and 3. Mediates its action by association with G proteins that activate a phosphatidylinositol-calcium second messenger system. The sequence is that of Endothelin receptor type B (EDNRB) from Equus caballus (Horse).